Here is a 194-residue protein sequence, read N- to C-terminus: Putative manganese efflux pump MntP (194 aa).

6 consecutive transmembrane segments (helical) span residues 3 to 23 (PITILLIGIAMSTDAFAAAIG), 37 to 57 (LYVAVIFGVIETATPIAGWLL), 65 to 85 (IAAFDHWIAFGLLSGLGIHMI), 112 to 132 (LAATALATSIDAAAIGISLAF), 137 to 157 (IGIVAAVIGLCTFTMVIFGVM), and 170 to 190 (AEIVGGIILIIVGSTILYEHL).

Belongs to the MntP (TC 9.B.29) family.

Its subcellular location is the cell inner membrane. In terms of biological role, probably functions as a manganese efflux pump. In Xylella fastidiosa (strain M12), this protein is Putative manganese efflux pump MntP.